Here is a 431-residue protein sequence, read N- to C-terminus: Histidinol dehydrogenase (431 aa).

NAD(+) contacts are provided by tyrosine 127, glutamine 189, and asparagine 212. The substrate site is built by serine 237, glutamine 259, and histidine 262. Positions 259 and 262 each coordinate Zn(2+). Active-site proton acceptor residues include glutamate 326 and histidine 327. Histidine 327, aspartate 360, glutamate 414, and histidine 419 together coordinate substrate. Residue aspartate 360 participates in Zn(2+) binding. Histidine 419 is a Zn(2+) binding site.

It belongs to the histidinol dehydrogenase family. It depends on Zn(2+) as a cofactor.

The catalysed reaction is L-histidinol + 2 NAD(+) + H2O = L-histidine + 2 NADH + 3 H(+). The protein operates within amino-acid biosynthesis; L-histidine biosynthesis; L-histidine from 5-phospho-alpha-D-ribose 1-diphosphate: step 9/9. Functionally, catalyzes the sequential NAD-dependent oxidations of L-histidinol to L-histidinaldehyde and then to L-histidine. The chain is Histidinol dehydrogenase from Xylella fastidiosa (strain Temecula1 / ATCC 700964).